We begin with the raw amino-acid sequence, 278 residues long: uncharacterized protein (278 aa).

A signal peptide spans 1–20 (MSPLIVGTLIIILLSGLATA). The GPI-anchor amidated glycine moiety is linked to residue glycine 96. A propeptide spans 97 to 278 (TFLTSPTAKR…QLIMQTFNGS (182 aa)) (removed in mature form).

It localises to the cell membrane. This is an uncharacterized protein from Schizosaccharomyces pombe (strain 972 / ATCC 24843) (Fission yeast).